Reading from the N-terminus, the 589-residue chain is Probable cytochrome P450 49a1 (589 aa).

The tract at residues 56–90 (TGESSNPKKLNVSQQPVTSVATTRTTASSLPAETT) is disordered. Polar residues predominate over residues 57 to 71 (GESSNPKKLNVSQQP). Low complexity predominate over residues 72–84 (VTSVATTRTTASS). A heme-binding site is contributed by Cys-536.

The protein belongs to the cytochrome P450 family. It depends on heme as a cofactor.

It localises to the endoplasmic reticulum membrane. The protein resides in the microsome membrane. Functionally, may be involved in the metabolism of insect hormones and in the breakdown of synthetic insecticides. The chain is Probable cytochrome P450 49a1 (Cyp49a1) from Drosophila melanogaster (Fruit fly).